A 244-amino-acid chain; its full sequence is Tubulin-folding cofactor B (244 aa).

An N-acetylmethionine modification is found at Met1. Tyr98 is subject to Phosphotyrosine. Ser110 is subject to Phosphoserine. The CAP-Gly domain occupies 183–225; the sequence is GLTDFKPGYWIGIRYDEPLGKNDGSVNGKRYFECQAKYGAFVK. Residue Lys219 is modified to N6-acetyllysine.

Belongs to the TBCB family. Supercomplex made of cofactors A to E. Cofactors A and D function by capturing and stabilizing tubulin in a quasi-native conformation. Cofactor E binds to the cofactor D-tubulin complex; interaction with cofactor C then causes the release of tubulin polypeptides that are committed to the native state. Cofactors B and E can form a heterodimer which binds to alpha-tubulin and enhances their ability to dissociate tubulin heterodimers. Interacts with GAN. Interacts with DCTN1. Ubiquitinated in the presence of GAN which targets it for degradation by the proteasome. In terms of processing, phosphorylation by PAK1 is required for normal function.

It localises to the cytoplasm. Its subcellular location is the cytoskeleton. Its function is as follows. Binds to alpha-tubulin folding intermediates after their interaction with cytosolic chaperonin in the pathway leading from newly synthesized tubulin to properly folded heterodimer. Involved in regulation of tubulin heterodimer dissociation. May function as a negative regulator of axonal growth. The sequence is that of Tubulin-folding cofactor B (TBCB) from Bos taurus (Bovine).